Reading from the N-terminus, the 496-residue chain is Hexokinase-2 (496 aa).

Residues 4–24 form a helical membrane-spanning segment; sequence ATVGAVVVGTAAAVAVAALIM. The Hexokinase domain occupies 35 to 487; sequence ARARAILKEF…SGIGAALLAA (453 aa). Residues 90–228 are hexokinase small subdomain; that stretch reads TGDEGGVFYA…EIDMRVSALV (139 aa). Residues Gly104, Thr105, and Asn106 each contribute to the ADP site. Residues Thr194, Lys195, Asn229, and Asp230 each contribute to the D-glucose site. Residues 229 to 476 are hexokinase large subdomain; that stretch reads NDTVGTLAGG…TSIVFKHAND (248 aa). Thr253 lines the ADP pocket. The D-glucose site is built by Asn256, Glu284, and Glu315. Residue Gly441 participates in ADP binding.

The protein belongs to the hexokinase family.

It localises to the plastid. The protein localises to the chloroplast outer membrane. It carries out the reaction a D-hexose + ATP = a D-hexose 6-phosphate + ADP + H(+). The enzyme catalyses D-fructose + ATP = D-fructose 6-phosphate + ADP + H(+). It catalyses the reaction D-glucose + ATP = D-glucose 6-phosphate + ADP + H(+). It functions in the pathway carbohydrate metabolism; hexose metabolism. It participates in carbohydrate degradation; glycolysis; D-glyceraldehyde 3-phosphate and glycerone phosphate from D-glucose: step 1/4. Functionally, fructose and glucose phosphorylating enzyme. May be involved in the phosphorylation of glucose during the export from plastids to cytosol. Seems neither to be involved in cell sugar sensing nor in carbohydrate metabolism in tuber. In Solanum tuberosum (Potato), this protein is Hexokinase-2 (HXK2).